The sequence spans 275 residues: 4-diphosphocytidyl-2-C-methyl-D-erythritol kinase (275 aa).

Residue K14 is part of the active site. 98 to 108 (PMGAGLGGGSS) lines the ATP pocket. Residue D140 is part of the active site.

It belongs to the GHMP kinase family. IspE subfamily.

The enzyme catalyses 4-CDP-2-C-methyl-D-erythritol + ATP = 4-CDP-2-C-methyl-D-erythritol 2-phosphate + ADP + H(+). Its pathway is isoprenoid biosynthesis; isopentenyl diphosphate biosynthesis via DXP pathway; isopentenyl diphosphate from 1-deoxy-D-xylulose 5-phosphate: step 3/6. In terms of biological role, catalyzes the phosphorylation of the position 2 hydroxy group of 4-diphosphocytidyl-2C-methyl-D-erythritol. This Francisella tularensis subsp. novicida (strain U112) protein is 4-diphosphocytidyl-2-C-methyl-D-erythritol kinase.